The chain runs to 155 residues: Non-secretory ribonuclease (155 aa).

The N-terminal stretch at 1 to 25 (MGPKLLESRLCLLLLLGLVLMLASC) is a signal peptide. A substrate-binding site is contributed by K33. Residue H38 is the Proton acceptor of the active site. N-linked (GlcNAc...) asparagine glycosylation occurs at N41. 4 cysteine pairs are disulfide-bonded: C47-C106, C61-C118, C79-C133, and C86-C94. Position 57 is a 3'-nitrotyrosine (Y57). 62 to 66 (KDINT) serves as a coordination point for substrate. N-linked (GlcNAc...) asparagine glycans are attached at residues N83, N88, and N107. The Proton donor role is filled by H150.

The protein belongs to the pancreatic ribonuclease family. As to quaternary structure, interacts with and forms a tight 1:1 complex with RNH1. Dimerization of two such complexes may occur.

Its subcellular location is the lysosome. The protein localises to the cytoplasmic granule. The enzyme catalyses an [RNA] containing cytidine + H2O = an [RNA]-3'-cytidine-3'-phosphate + a 5'-hydroxy-ribonucleotide-3'-[RNA].. It carries out the reaction an [RNA] containing uridine + H2O = an [RNA]-3'-uridine-3'-phosphate + a 5'-hydroxy-ribonucleotide-3'-[RNA].. This is a non-secretory ribonuclease. It is a pyrimidine specific nuclease with a slight preference for U. Cytotoxin and helminthotoxin. Possesses a wide variety of biological activities. The polypeptide is Non-secretory ribonuclease (Rnase2) (Mus musculus (Mouse)).